Consider the following 191-residue polypeptide: Peptidyl-tRNA hydrolase (191 aa).

Tyrosine 17 contributes to the tRNA binding site. Residue histidine 22 is the Proton acceptor of the active site. TRNA contacts are provided by tyrosine 68, asparagine 70, and asparagine 116.

The protein belongs to the PTH family. As to quaternary structure, monomer.

It is found in the cytoplasm. The catalysed reaction is an N-acyl-L-alpha-aminoacyl-tRNA + H2O = an N-acyl-L-amino acid + a tRNA + H(+). Hydrolyzes ribosome-free peptidyl-tRNAs (with 1 or more amino acids incorporated), which drop off the ribosome during protein synthesis, or as a result of ribosome stalling. Functionally, catalyzes the release of premature peptidyl moieties from peptidyl-tRNA molecules trapped in stalled 50S ribosomal subunits, and thus maintains levels of free tRNAs and 50S ribosomes. The sequence is that of Peptidyl-tRNA hydrolase from Mycobacterium avium (strain 104).